The chain runs to 482 residues: GTPase Obg (482 aa).

The 158-residue stretch at 2-159 folds into the Obg domain; the sequence is PRFVDRVVIH…VDLTLELKTV (158 aa). The 181-residue stretch at 160-340 folds into the OBG-type G domain; sequence ADVGLVGFPS…LTFALWEMIV (181 aa). Residues 166–173, 191–195, 212–215, 292–295, and 321–323 contribute to the GTP site; these read GFPSAGKS, FTTLV, DVPG, NKVD, and STL. Serine 173 and threonine 193 together coordinate Mg(2+). Positions 358–438 constitute an OCT domain; it reads PIPVDESGFT…IGDMTFDWEP (81 aa). The interval 441–482 is disordered; the sequence is PAGVDVTMSGRGTDARIDKTDRVGAAERRQARRVRRGQVEPE. Residues 453–469 are compositionally biased toward basic and acidic residues; that stretch reads TDARIDKTDRVGAAERR.

This sequence belongs to the TRAFAC class OBG-HflX-like GTPase superfamily. OBG GTPase family. In terms of assembly, monomer. The cofactor is Mg(2+).

Its subcellular location is the cytoplasm. Functionally, an essential GTPase which binds GTP, GDP and possibly (p)ppGpp with moderate affinity, with high nucleotide exchange rates and a fairly low GTP hydrolysis rate. Plays a role in control of the cell cycle, stress response, ribosome biogenesis and in those bacteria that undergo differentiation, in morphogenesis control. The sequence is that of GTPase Obg from Mycobacteroides abscessus (strain ATCC 19977 / DSM 44196 / CCUG 20993 / CIP 104536 / JCM 13569 / NCTC 13031 / TMC 1543 / L948) (Mycobacterium abscessus).